A 103-amino-acid polypeptide reads, in one-letter code: N(4)-acetylcytidine amidohydrolase (103 aa).

The region spanning 6-100 (ITFFQRFQND…NQMQFYVIDF (95 aa)) is the ASCH domain. The active-site Proton acceptor is Lys-21. Residue Thr-24 is the Nucleophile of the active site. Glu-74 serves as the catalytic Proton donor.

Belongs to the N(4)-acetylcytidine amidohydrolase family.

It carries out the reaction N(4)-acetylcytidine + H2O = cytidine + acetate + H(+). The catalysed reaction is N(4)-acetyl-2'-deoxycytidine + H2O = 2'-deoxycytidine + acetate + H(+). The enzyme catalyses N(4)-acetylcytosine + H2O = cytosine + acetate + H(+). Functionally, catalyzes the hydrolysis of N(4)-acetylcytidine (ac4C). The chain is N(4)-acetylcytidine amidohydrolase (yqfB) from Salmonella arizonae (strain ATCC BAA-731 / CDC346-86 / RSK2980).